The primary structure comprises 928 residues: Outer membrane protein SlpA (928 aa).

The first 23 residues, 1–23, serve as a signal peptide directing secretion; that stretch reads MKKRLVTLLAGLLTVLSMGFGLA. Residues 24–84 form the SLH domain; that stretch reads QFSDVPAGHW…QQIEEELKTQ (61 aa).

Homotrimer.

It is found in the cell outer membrane. Plays an important role in the structural organization and integrity of the cell envelope, bridging the outer membrane to the peptidoglyan layer. Appears to be a nonselective channel. The sequence is that of Outer membrane protein SlpA (slpA) from Thermus thermophilus (strain ATCC 27634 / DSM 579 / HB8).